The primary structure comprises 123 residues: Large ribosomal subunit protein bL12 (123 aa).

It belongs to the bacterial ribosomal protein bL12 family. In terms of assembly, homodimer. Part of the ribosomal stalk of the 50S ribosomal subunit. Forms a multimeric L10(L12)X complex, where L10 forms an elongated spine to which 2 to 4 L12 dimers bind in a sequential fashion. Binds GTP-bound translation factors.

Its function is as follows. Forms part of the ribosomal stalk which helps the ribosome interact with GTP-bound translation factors. Is thus essential for accurate translation. In Shewanella sp. (strain MR-4), this protein is Large ribosomal subunit protein bL12.